Here is a 202-residue protein sequence, read N- to C-terminus: Small heat shock protein hspG5 (202 aa).

One can recognise a sHSP domain in the interval 31-202; that stretch reads KTIIDIIPPM…YSNTIKININ (172 aa). The disordered stretch occupies residues 96–138; the sequence is TSSTTLDSKEDEASIEEFEDDIKPKSKSTVTTTATKENKEDEN.

This sequence belongs to the small heat shock protein (HSP20) family.

The sequence is that of Small heat shock protein hspG5 (hspG5) from Dictyostelium discoideum (Social amoeba).